The primary structure comprises 159 residues: 2-C-methyl-D-erythritol 2,4-cyclodiphosphate synthase (159 aa).

Positions 10 and 12 each coordinate a divalent metal cation. 4-CDP-2-C-methyl-D-erythritol 2-phosphate is bound by residues 10–12 and 36–37; these read DVH and HS. Residue His44 coordinates a divalent metal cation. 4-CDP-2-C-methyl-D-erythritol 2-phosphate is bound by residues 58–60, 63–67, 134–137, and Arg144; these read DIG, FANTD, and TTNE.

Belongs to the IspF family. Homotrimer. A divalent metal cation is required as a cofactor.

The enzyme catalyses 4-CDP-2-C-methyl-D-erythritol 2-phosphate = 2-C-methyl-D-erythritol 2,4-cyclic diphosphate + CMP. The protein operates within isoprenoid biosynthesis; isopentenyl diphosphate biosynthesis via DXP pathway; isopentenyl diphosphate from 1-deoxy-D-xylulose 5-phosphate: step 4/6. Involved in the biosynthesis of isopentenyl diphosphate (IPP) and dimethylallyl diphosphate (DMAPP), two major building blocks of isoprenoid compounds. Catalyzes the conversion of 4-diphosphocytidyl-2-C-methyl-D-erythritol 2-phosphate (CDP-ME2P) to 2-C-methyl-D-erythritol 2,4-cyclodiphosphate (ME-CPP) with a corresponding release of cytidine 5-monophosphate (CMP). In Cytophaga hutchinsonii (strain ATCC 33406 / DSM 1761 / CIP 103989 / NBRC 15051 / NCIMB 9469 / D465), this protein is 2-C-methyl-D-erythritol 2,4-cyclodiphosphate synthase.